Consider the following 162-residue polypeptide: Probable chemoreceptor glutamine deamidase CheD 3 (162 aa).

It belongs to the CheD family.

The catalysed reaction is L-glutaminyl-[protein] + H2O = L-glutamyl-[protein] + NH4(+). Probably deamidates glutamine residues to glutamate on methyl-accepting chemotaxis receptors (MCPs), playing an important role in chemotaxis. The polypeptide is Probable chemoreceptor glutamine deamidase CheD 3 (Geobacter sulfurreducens (strain ATCC 51573 / DSM 12127 / PCA)).